A 320-amino-acid polypeptide reads, in one-letter code: o-succinylbenzoate synthase (320 aa).

Lysine 133 (proton donor) is an active-site residue. Mg(2+) is bound by residues aspartate 161, glutamate 190, and aspartate 213. Residue lysine 235 is the Proton acceptor of the active site.

Belongs to the mandelate racemase/muconate lactonizing enzyme family. MenC type 1 subfamily. A divalent metal cation is required as a cofactor.

The catalysed reaction is (1R,6R)-6-hydroxy-2-succinyl-cyclohexa-2,4-diene-1-carboxylate = 2-succinylbenzoate + H2O. It participates in quinol/quinone metabolism; 1,4-dihydroxy-2-naphthoate biosynthesis; 1,4-dihydroxy-2-naphthoate from chorismate: step 4/7. The protein operates within quinol/quinone metabolism; menaquinone biosynthesis. In terms of biological role, converts 2-succinyl-6-hydroxy-2,4-cyclohexadiene-1-carboxylate (SHCHC) to 2-succinylbenzoate (OSB). This is o-succinylbenzoate synthase from Escherichia coli O17:K52:H18 (strain UMN026 / ExPEC).